Reading from the N-terminus, the 555-residue chain is Xylulose kinase (555 aa).

Residues His-88, Arg-158, Asp-274, and Asn-275 each coordinate substrate. ATP-binding positions include Trp-357, 455-456 (GA), and Asn-459.

This sequence belongs to the FGGY kinase family.

The protein resides in the cytoplasm. The catalysed reaction is D-xylulose + ATP = D-xylulose 5-phosphate + ADP + H(+). The sequence is that of Xylulose kinase from Schizosaccharomyces pombe (strain 972 / ATCC 24843) (Fission yeast).